A 650-amino-acid chain; its full sequence is Acetoacetyl-coenzyme A synthetase (650 aa).

199-202 (YNGK) lines the CoA pocket. ATP-binding positions include 392–394 (GSP), aspartate 504, arginine 519, and arginine 530. Residue valine 546 participates in Mg(2+) binding. Arginine 587 contributes to the CoA binding site. Lysine 612 carries the post-translational modification N6-acetyllysine.

This sequence belongs to the ATP-dependent AMP-binding enzyme family. Mg(2+) is required as a cofactor. Post-translationally, acetylated. Deacetylation by the SIR2-homolog deacetylase activates the enzyme.

The catalysed reaction is acetoacetate + ATP + CoA = acetoacetyl-CoA + AMP + diphosphate. It participates in biopolymer metabolism; poly-(R)-3-hydroxybutanoate degradation. In terms of biological role, catalyzes the conversion of acetoacetate into acetoacetyl-CoA. Is involved in poly-3-hydroxybutyrate (PHB) degradation, which allows growth of R.meliloti on PHB cycle intermediates. The chain is Acetoacetyl-coenzyme A synthetase from Rhizobium meliloti (strain 1021) (Ensifer meliloti).